Here is a 505-residue protein sequence, read N- to C-terminus: Maturase K (505 aa).

This sequence belongs to the intron maturase 2 family. MatK subfamily.

It localises to the plastid. The protein localises to the chloroplast. Functionally, usually encoded in the trnK tRNA gene intron. Probably assists in splicing its own and other chloroplast group II introns. The sequence is that of Maturase K from Calycanthus occidentalis (Spice bush).